The primary structure comprises 466 residues: Cysteine--tRNA ligase (466 aa).

Residue cysteine 27 participates in Zn(2+) binding. Residues 29 to 39 carry the 'HIGH' region motif; that stretch reads PTVYDDAHLGH. Residues cysteine 208, histidine 238, and glutamate 242 each contribute to the Zn(2+) site. A 'KMSKS' region motif is present at residues 270–274; sequence KMSKS. ATP is bound at residue lysine 273.

It belongs to the class-I aminoacyl-tRNA synthetase family. In terms of assembly, monomer. Zn(2+) is required as a cofactor.

It localises to the cytoplasm. It catalyses the reaction tRNA(Cys) + L-cysteine + ATP = L-cysteinyl-tRNA(Cys) + AMP + diphosphate. The protein is Cysteine--tRNA ligase of Sulfurimonas denitrificans (strain ATCC 33889 / DSM 1251) (Thiomicrospira denitrificans (strain ATCC 33889 / DSM 1251)).